The following is a 331-amino-acid chain: UPF0324 membrane protein SACOL0411 (331 aa).

The next 11 helical transmembrane spans lie at 9-26 (FMIG…SFLA), 31-48 (ILDK…AILY), 69-88 (LLRF…DIIG), 93-115 (LLAI…NKLL), 122-144 (ALLL…APIF), 154-176 (SIGI…YAIF), 183-202 (YGAW…LAGG), 217-234 (LGRV…ILIM), 247-269 (ISIP…VTIP), 273-295 (LNIL…GLNV), and 308-330 (LMTI…HWLY).

The protein belongs to the UPF0324 family.

Its subcellular location is the cell membrane. This is UPF0324 membrane protein SACOL0411 from Staphylococcus aureus (strain COL).